The primary structure comprises 404 residues: Diphosphomevalonate decarboxylase mvd1 (404 aa).

(R)-5-diphosphomevalonate contacts are provided by residues 25 to 28 (YWGK), R82, 161 to 166 (SGSACR), and T217.

This sequence belongs to the diphosphomevalonate decarboxylase family. Homodimer.

It catalyses the reaction (R)-5-diphosphomevalonate + ATP = isopentenyl diphosphate + ADP + phosphate + CO2. It participates in isoprenoid biosynthesis; isopentenyl diphosphate biosynthesis via mevalonate pathway; isopentenyl diphosphate from (R)-mevalonate: step 3/3. Functionally, diphosphomevalonate decarboxylase; part of the second module of ergosterol biosynthesis pathway that includes the middle steps of the pathway. Mvd1 converts diphosphomevalonate into isopentenyl diphosphate. The second module is carried out in the vacuole and involves the formation of farnesyl diphosphate, which is also an important intermediate in the biosynthesis of ubiquinone, dolichol, heme and prenylated proteins. Activity by the mevalonate kinase erg12 (AFUA_4G07780) first converts mevalonate into 5-phosphomevalonate. 5-phosphomevalonate is then further converted to 5-diphosphomevalonate by the phosphomevalonate kinase erg8 (AFUA_5G10680). The diphosphomevalonate decarboxylase mvd1 (AFUA_4G07130) then produces isopentenyl diphosphate. The isopentenyl-diphosphate delta-isomerase idi1 (AFUA_6G11160) then catalyzes the 1,3-allylic rearrangement of the homoallylic substrate isopentenyl (IPP) to its highly electrophilic allylic isomer, dimethylallyl diphosphate (DMAPP). Finally the farnesyl diphosphate synthase erg20 (AFUA_5G02450) catalyzes the sequential condensation of isopentenyl pyrophosphate with dimethylallyl pyrophosphate, and then with the resultant geranylpyrophosphate to the ultimate product farnesyl pyrophosphate. This is Diphosphomevalonate decarboxylase mvd1 from Aspergillus fumigatus (strain ATCC MYA-4609 / CBS 101355 / FGSC A1100 / Af293) (Neosartorya fumigata).